The sequence spans 1048 residues: Nonsense-mediated mRNA decay protein 5 (1048 aa).

An Importin N-terminal domain is found at 24–104 (AETHLKNASK…KDMLIKTMVS (81 aa)). Serine 977 bears the Phosphoserine mark.

In terms of assembly, GTP-bound Ran dissociates the isolated NMD5/TFIIS complex.

It is found in the nucleus. Its subcellular location is the cytoplasm. In terms of biological role, active in protein import into the nucleus. Its major import substrate is transcription elongation factor TFIIS. This Saccharomyces cerevisiae (strain ATCC 204508 / S288c) (Baker's yeast) protein is Nonsense-mediated mRNA decay protein 5 (NMD5).